We begin with the raw amino-acid sequence, 368 residues long: HECT-type ubiquitin ligase-interacting protein apyA (368 aa).

This sequence belongs to the arrestin family. In terms of assembly, interacts with hulA.

May be involved in signaling by recognizing appropriately phosphorylated substrates via its arrestin domains and then recruit a HECT-type ubiquitin ligase such as hulA, leading to ubiquitination of the substrate, providing a link between ubiquitination and phosphorylation in protein regulation and stability. The chain is HECT-type ubiquitin ligase-interacting protein apyA (apyA) from Emericella nidulans (strain FGSC A4 / ATCC 38163 / CBS 112.46 / NRRL 194 / M139) (Aspergillus nidulans).